The primary structure comprises 1645 residues: Cortactin-binding protein 2 (1645 aa).

Disordered stretches follow at residues 1–28 (MATD…EAAK), 269–293 (LKRG…SVSI), 366–435 (IVSS…AALH), 451–478 (GNAN…SRDS), and 492–612 (ALSR…PPKP). Residues 119–276 (RKMQERMSTQ…EQLKRGNDSK (158 aa)) are a coiled coil. Composition is skewed to polar residues over residues 407-417 (QTPTIAPQSHA) and 451-477 (GNAN…TSRD). Residue Arg-495 is modified to Asymmetric dimethylarginine. The span at 580 to 590 (TMASPPSTLPQ) shows a compositional bias: polar residues. ANK repeat units lie at residues 706-736 (GRPT…DINY), 740-769 (DGHS…QVNA), 773-802 (NGFT…NINH), 806-835 (EGQT…DRSV), 839-868 (DGWT…PARR), and 909-939 (EGWT…EPER). The segment at 868-898 (RNSLHEEEPESGVFDLDQGEESPEGTSKPVI) is disordered. Positions 1442 to 1479 (CSRKKGESGAWRKVSTSPRKKSGRFSPPSWSKPGPSEE) are disordered. Ser-1521 carries the post-translational modification Phosphoserine. The segment at 1551-1645 (DDLRSFDSPG…EINNNSKEEI (95 aa)) is disordered. 2 stretches are compositionally biased toward polar residues: residues 1558-1569 (SPGNSPAFSATV) and 1582-1597 (PFSS…SQSK). Positions 1620–1634 (SQNTKRSSSSSNTRQ) are enriched in low complexity. Polar residues predominate over residues 1635 to 1645 (IEINNNSKEEI).

As to quaternary structure, interacts with CTTN/cortactin SH3 domain. Interacts with STRN, STRN4/zinedin and MOB4/phocein; this interactions mediate the association with the STRIPAK core complex and may regulate dendritic spine distribution of the STRIPAK complex in hippocampal neurons. Activation of glutamate receptors weakens the interaction with STRN and STRN4.

The protein resides in the cytoplasm. Its subcellular location is the cell cortex. It is found in the cell projection. The protein localises to the dendritic spine. Regulates the dendritic spine distribution of CTTN/cortactin in hippocampal neurons, and thus controls dendritic spinogenesis and dendritic spine maintenance. Associates with the striatin-interacting phosphatase and kinase (STRIPAK) core complex to regulate dendritic spine distribution of the STRIPAK complex in hippocampal neurons. This Mustela putorius furo (European domestic ferret) protein is Cortactin-binding protein 2 (CTTNBP2).